The primary structure comprises 1322 residues: MPVVWPTLLDLSRDECKRILRKLELEAYAGVISALRAQGDLTKEKKDLLGELSKVLSISTERHRAEVRRAVNDERLTTIAHNMSGPNSSSEWSIEGRRLVPLMPRLVPQTAFTVTANAVANAAIQHNASLPVPAETGSKEVVCYSYTSTTSTPTSTPVPSGSIATVKSPRPASPASNVVVLPSGSTVYVKSVSCSDEDEKPRKRRRTNSSSSSPVVLKEVPKAVVPVSKTITVPVSGSPKMSNIMQSIANSLPPHMSPVKITFTKPSTQTTNTTTQKVIIVTTSPSSTFVPNILSKSHNYAAVTKLVPTSVIASTTQKPPVVITASQSSLVSNSSSGSSSSTPSPIPNTVAVTAVVSSTPSVVMSTVAQGVSTSAIKMASTRLPSPKSLVSAPTQILAQFPKQHQQSPKQQLYQVQQQTQQQVAQPSPVSHQQQPQQSPLPPGIKPTIQIKQESGVKIITQQVQPSKILPKPVTATLPTSSNSPIMVVSSNGAIMTTKLVTTPTGTQATYTRPTVSPSIGRMAATPGAATYVKTTSGSIITVVPKSLATLGGKIISSNIVSGTTTKITTIPMTSKPNVIVVQKTTGKGTTIQGLPGKNVVTTLLNAGGEKTIQTVPTGAKPAILTATRPITKMIVTQPKGIGSTVQPAAKIIPTKIVYGQQGKTQVLIKPKPVTFQATVVSEQTRQLVTETLQQASRVAEAGNSSIQEGKEEPQNYTDSSSSSTESSQSSQDSQPVVHVIASRRQDWSEHEIAMETSPTIIYQDVSSESQSATSTIKALLELQQTTVKEKLESKPRQPTIDLSQMAVPIQMTQEKRHSPESPSIAVVESELVAEYITTERTDEGTEVAFPLLVSHRSQPQQPSQPQRTLLQHVAQSQTATQTSVVVKSIPASSPGAITHIMQQALSSHTAFTKHSEELGTEEGEVEEMDTLDPQTGLFYRSALTQSQSAKQQKLSQPPLEQTQLQVKTLQCFQTKQKQTIHLQADQLQHKLPQMPQLSIRHQKLTPLQQEQAQPKPDVQHTQHPMVAKDRQLPTLMAQPPQTVVQVLAVKTTQQLPKLQQAPNQPKIYVQPQTPQSQMSLPASSEKQTASQVEQPIITQGSSVTKITFEGRQPPTVTKITGGSSVPKLTSPVTSISPIQASEKTAVSDILKMSLMEAQIDTNVEHMIVDPPKKALATSMLTGEAGSLPSTHMVVAGMANSTPQQQKCRESCSSPSTVGSSLTTRKIDPPAVPATGQFMRIQNVGQKKAEESPAEIIIQAIPQYAIPCHSSSNVVVEPSGLLELNNFTSQQLDDEETAMEQDIDSSTEDGTEPSPSQSSAERS.

The segment at 1 to 478 (MPVVWPTLLD…LPKPVTATLP (478 aa)) is interaction with BRCA2. An ENT domain is found at 16–100 (CKRILRKLEL…EWSIEGRRLV (85 aa)). Positions 104-108 (PRLVP) are interaction with ZMYND11. Over residues 148 to 162 (STTSTPTSTPVPSGS) the composition is skewed to low complexity. Disordered stretches follow at residues 148-178 (STTSTPTSTPVPSGSIATVKSPRPASPASNV) and 192-215 (VSCSDEDEKPRKRRRTNSSSSSPV). T207 is subject to Phosphothreonine. Residues S209 and S213 each carry the phosphoserine modification. O-linked (GlcNAc) serine glycosylation is found at S228 and S236. S238 is subject to Phosphoserine. T271 carries an O-linked (GlcNAc) threonine glycan. The segment covering 417–437 (QQTQQQVAQPSPVSHQQQPQQ) has biased composition (low complexity). Residues 417–444 (QQTQQQVAQPSPVSHQQQPQQSPLPPGI) form a disordered region. 2 O-linked (GlcNAc) threonine glycosylation sites follow: T501 and T506. O-linked (GlcNAc) serine glycosylation is present at S557. The segment covering 698 to 707 (VAEAGNSSIQ) has biased composition (polar residues). Residues 698-736 (VAEAGNSSIQEGKEEPQNYTDSSSSSTESSQSSQDSQPV) form a disordered region. Positions 717–734 (TDSSSSSTESSQSSQDSQ) are enriched in low complexity. S818 and S821 each carry phosphoserine. An O-linked (GlcNAc) threonine glycan is attached at T1120. Phosphoserine is present on S1136. Residues 1205-1223 (QKCRESCSSPSTVGSSLTT) show a composition bias toward polar residues. Disordered stretches follow at residues 1205–1231 (QKCRESCSSPSTVGSSLTTRKIDPPAV) and 1290–1322 (QLDDEETAMEQDIDSSTEDGTEPSPSQSSAERS). Over residues 1291–1310 (LDDEETAMEQDIDSSTEDGT) the composition is skewed to acidic residues. Polar residues predominate over residues 1312 to 1322 (PSPSQSSAERS).

As to quaternary structure, homodimer. Interacts with the transactivation domain of BRCA2. Interacts with CBX1 (via chromoshadow domain). Interacts with ZMYND11. Does not interact with CBX3 or CBX5. Component of a nuclear receptor-mediated transcription complex composed of at least ZNF335, CCAR2 and EMSY; the complex stimulates the transcription of nuclear receptor target genes such as SOX9 and HOXA1. Within the complex interacts with CCAR2 and ZNF335. Components of this complex may associate with components of a histone methylation complex to form a complex at least composed of ZNF335, HCFC1, CCAR2, EMSY, MKI67, RBBP5, ASH2L and WDR5. Within this complex, interacts with ASH2L and RBBP5. Post-translationally, O-glycosylated during cytokinesis at sites identical or close to phosphorylation sites, this interferes with the phosphorylation status.

It localises to the nucleus. Its function is as follows. Regulator which is able to repress transcription, possibly via its interaction with a multiprotein chromatin remodeling complex that modifies the chromatin. Its interaction with BRCA2 suggests that it may play a central role in the DNA repair function of BRCA2. Mediates ligand-dependent transcriptional activation by nuclear hormone receptors. In Homo sapiens (Human), this protein is BRCA2-interacting transcriptional repressor EMSY.